The chain runs to 540 residues: Cystathionine gamma-synthase 1, chloroplastic (540 aa).

Residues 1 to 78 constitute a chloroplast transit peptide; it reads MAVSSCARAF…RNCSNIGVAQ (78 aa). Y203, R205, G233, M234, Y258, S353, and T355 together coordinate pyridoxal 5'-phosphate. K356 is subject to N6-(pyridoxal phosphate)lysine.

Belongs to the trans-sulfuration enzymes family. Forms homotetramers composed of 2 homodimers. Pyridoxal 5'-phosphate is required as a cofactor.

It is found in the plastid. The protein localises to the chloroplast. It catalyses the reaction O-phospho-L-homoserine + L-cysteine = L,L-cystathionine + phosphate. It carries out the reaction O-succinyl-L-homoserine + L-cysteine = L,L-cystathionine + succinate + H(+). It participates in amino-acid biosynthesis; L-methionine biosynthesis via de novo pathway; L-cystathionine from O-succinyl-L-homoserine: step 1/1. Its activity is regulated as follows. Irreversibly inactivated by DL-propargylglycine. Its function is as follows. Catalyzes the first committed step of methionine (Met) biosynthesis. Catalyzes the formation of L-cystathionine from homoserine esters and L-cysteine, via a gamma-replacement reaction. The chain is Cystathionine gamma-synthase 1, chloroplastic from Nicotiana tabacum (Common tobacco).